Consider the following 146-residue polypeptide: VHLTDAEKALVTGLWGKVKPDELGGEALGRLLGVYPWTQRFFDSFGDLSSASALMSNAKVKAHGKKVLDSFSEGLKHLDNLKGTFASLSELHCDKLHVDPENFKLLGNMLVLVMAHHLGKDFTPAAQAAYQKVVAGVATALAHKYH.

N-acetylvaline is present on V1. Positions 2 to 146 (HLTDAEKALV…VATALAHKYH (145 aa)) constitute a Globin domain. T12 carries the post-translational modification Phosphothreonine. S44 bears the Phosphoserine mark. K59 is modified (N6-acetyllysine). H63 contacts heme b. K82 carries the N6-acetyllysine modification. H92 contacts heme b. C93 carries the S-nitrosocysteine modification. N6-acetyllysine is present on K144.

This sequence belongs to the globin family. In terms of assembly, heterotetramer of two alpha chains and two beta chains. As to expression, red blood cells.

Functionally, involved in oxygen transport from the lung to the various peripheral tissues. The chain is Hemoglobin subunit beta from Peromyscus crinitus (Canyon mouse).